The chain runs to 61 residues: Small ribosomal subunit protein uS14 (61 aa).

Residues C24, C27, C40, and C43 each contribute to the Zn(2+) site.

This sequence belongs to the universal ribosomal protein uS14 family. Zinc-binding uS14 subfamily. As to quaternary structure, part of the 30S ribosomal subunit. Contacts proteins S3 and S10. Requires Zn(2+) as cofactor.

Its function is as follows. Binds 16S rRNA, required for the assembly of 30S particles and may also be responsible for determining the conformation of the 16S rRNA at the A site. The sequence is that of Small ribosomal subunit protein uS14 from Acidothermus cellulolyticus (strain ATCC 43068 / DSM 8971 / 11B).